A 164-amino-acid chain; its full sequence is Large ribosomal subunit protein bL9 (164 aa).

It belongs to the bacterial ribosomal protein bL9 family.

In terms of biological role, binds to the 23S rRNA. This Borrelia duttonii (strain Ly) protein is Large ribosomal subunit protein bL9.